The chain runs to 75 residues: UPF0352 protein YejL (75 aa).

Belongs to the UPF0352 family.

The chain is UPF0352 protein YejL from Salmonella arizonae (strain ATCC BAA-731 / CDC346-86 / RSK2980).